The following is a 395-amino-acid chain: uncharacterized protein (395 aa).

The segment covering 286–306 (SSNKSSESTMTSPLDSASSLH) has biased composition (low complexity). The segment at 286 to 395 (SSNKSSESTM…RNDDSGLESV (110 aa)) is disordered. Residues 350–362 (RPPPPSVHPPIFP) are compositionally biased toward pro residues. A compositionally biased stretch (polar residues) spans 364–385 (QTQLFHPPTYSTQRHVTSPNSS).

This is an uncharacterized protein from Caenorhabditis elegans.